We begin with the raw amino-acid sequence, 583 residues long: uncharacterized protein (583 aa).

Polar residues predominate over residues Met-1 to Phe-38. Disordered stretches follow at residues Met-1–Ser-39, Gly-53–Gln-124, Thr-156–Gly-197, and Asn-362–His-452. A compositionally biased stretch (basic and acidic residues) spans Gly-70–Ala-80. The segment covering Ser-88–Pro-102 has biased composition (low complexity). 4 stretches are compositionally biased toward polar residues: residues Thr-156–Ser-165, Val-172–Ser-191, Leu-384–Val-408, and Ala-420–His-452. An RING-type zinc finger spans residues Cys-525 to Arg-568. Ser-580 is modified (phosphoserine).

The protein resides in the membrane. This is an uncharacterized protein from Schizosaccharomyces pombe (strain 972 / ATCC 24843) (Fission yeast).